The primary structure comprises 453 residues: Nuclear hormone receptor family member nhr-12 (453 aa).

The disordered stretch occupies residues 1–37 (MEQIPQEQKTEPFLASFTTTEKLGTETPTTSITPNTQ). Low complexity predominate over residues 18–36 (TTTEKLGTETPTTSITPNT). Positions 44 to 119 (KPNCAVCNEV…VGMNPECVQN (76 aa)) form a DNA-binding region, nuclear receptor. 2 consecutive NR C4-type zinc fingers follow at residues 47–67 (CAVC…CRAC) and 83–107 (CRAG…YDKC). The NR LBD domain occupies 178–451 (FSPASLPGLS…ENFVNIINGK (274 aa)).

The protein belongs to the nuclear hormone receptor family.

It localises to the nucleus. In terms of biological role, orphan nuclear receptor. This chain is Nuclear hormone receptor family member nhr-12 (nhr-12), found in Caenorhabditis elegans.